A 212-amino-acid polypeptide reads, in one-letter code: ATP-dependent Clp protease proteolytic subunit (212 aa).

S114 acts as the Nucleophile in catalysis. H139 is an active-site residue.

It belongs to the peptidase S14 family. As to quaternary structure, fourteen ClpP subunits assemble into 2 heptameric rings which stack back to back to give a disk-like structure with a central cavity, resembling the structure of eukaryotic proteasomes.

The protein resides in the cytoplasm. It carries out the reaction Hydrolysis of proteins to small peptides in the presence of ATP and magnesium. alpha-casein is the usual test substrate. In the absence of ATP, only oligopeptides shorter than five residues are hydrolyzed (such as succinyl-Leu-Tyr-|-NHMec, and Leu-Tyr-Leu-|-Tyr-Trp, in which cleavage of the -Tyr-|-Leu- and -Tyr-|-Trp bonds also occurs).. Its function is as follows. Cleaves peptides in various proteins in a process that requires ATP hydrolysis. Has a chymotrypsin-like activity. Plays a major role in the degradation of misfolded proteins. This chain is ATP-dependent Clp protease proteolytic subunit, found in Azoarcus sp. (strain BH72).